Here is a 194-residue protein sequence, read N- to C-terminus: uncharacterized protein (194 aa).

An N-terminal signal peptide occupies residues 1–29; it reads MKKAFLVFLSVVLVTTVFLVKQQESVAQA. Positions 104 to 131 form a coiled coil; the sequence is KVDELLKKAGQIVEEKVEAAKEIAASKD. A helical transmembrane segment spans residues 149-171; sequence YFYYVSYVAAAGALILIILAIDI.

It is found in the membrane. This is an uncharacterized protein from Bacillus subtilis (strain 168).